We begin with the raw amino-acid sequence, 916 residues long: Chitin synthase B (916 aa).

Disordered regions lie at residues 1 to 84 and 114 to 141; these read MAYQ…AGFH and SPYARSETSSTEAWRQRQAPGGGGGGGL. N-linked (GlcNAc...) asparagine glycosylation occurs at Asn-18. A compositionally biased stretch (polar residues) spans 60–75; the sequence is RGTSPVRPTSGYSLTE. Asn-546 carries N-linked (GlcNAc...) asparagine glycosylation. A run of 7 helical transmembrane segments spans residues 572-594, 628-648, 663-683, 715-735, 743-763, 845-865, and 884-904; these read MFFLHIQMLYNVFNTILTWFSLA, IINTIVKYVYLGLLLLQFILA, SFVVFGIIQIYVVVDALYLVV, IIIIALAATFGLYFVASFMYL, SFPAYMFVQSSYINVLNVYAF, LVTLWIFSNAFLAVCITSDGM, and ALLWSNAAVALVRFIGACWFL.

It belongs to the chitin synthase family. Class III subfamily.

The protein resides in the cell membrane. The enzyme catalyses [(1-&gt;4)-N-acetyl-beta-D-glucosaminyl](n) + UDP-N-acetyl-alpha-D-glucosamine = [(1-&gt;4)-N-acetyl-beta-D-glucosaminyl](n+1) + UDP + H(+). Polymerizes chitin, a structural polymer of the cell wall and septum, by transferring the sugar moiety of UDP-GlcNAc to the non-reducing end of the growing chitin polymer. Involved in hyphal growth and more particularly in branching. This Aspergillus oryzae (strain ATCC 42149 / RIB 40) (Yellow koji mold) protein is Chitin synthase B.